Reading from the N-terminus, the 442-residue chain is tRNA-2-methylthio-N(6)-dimethylallyladenosine synthase (442 aa).

Positions 6–122 (RKFYIHTFGC…LPALIAEAGD (117 aa)) constitute an MTTase N-terminal domain. 6 residues coordinate [4Fe-4S] cluster: Cys-15, Cys-51, Cys-85, Cys-157, Cys-161, and Cys-164. The region spanning 143 to 373 (RTQSLNAFVP…IDLQNGISAE (231 aa)) is the Radical SAM core domain. The 64-residue stretch at 376–439 (GLAPGSVVEV…SATLFGQSAE (64 aa)) folds into the TRAM domain.

This sequence belongs to the methylthiotransferase family. MiaB subfamily. As to quaternary structure, monomer. Requires [4Fe-4S] cluster as cofactor.

The protein resides in the cytoplasm. The enzyme catalyses N(6)-dimethylallyladenosine(37) in tRNA + (sulfur carrier)-SH + AH2 + 2 S-adenosyl-L-methionine = 2-methylsulfanyl-N(6)-dimethylallyladenosine(37) in tRNA + (sulfur carrier)-H + 5'-deoxyadenosine + L-methionine + A + S-adenosyl-L-homocysteine + 2 H(+). Its function is as follows. Catalyzes the methylthiolation of N6-(dimethylallyl)adenosine (i(6)A), leading to the formation of 2-methylthio-N6-(dimethylallyl)adenosine (ms(2)i(6)A) at position 37 in tRNAs that read codons beginning with uridine. The polypeptide is tRNA-2-methylthio-N(6)-dimethylallyladenosine synthase (Chlorobium phaeobacteroides (strain DSM 266 / SMG 266 / 2430)).